A 568-amino-acid polypeptide reads, in one-letter code: Proline--tRNA ligase (568 aa).

It belongs to the class-II aminoacyl-tRNA synthetase family. ProS type 1 subfamily. In terms of assembly, homodimer.

It localises to the cytoplasm. The catalysed reaction is tRNA(Pro) + L-proline + ATP = L-prolyl-tRNA(Pro) + AMP + diphosphate. Its function is as follows. Catalyzes the attachment of proline to tRNA(Pro) in a two-step reaction: proline is first activated by ATP to form Pro-AMP and then transferred to the acceptor end of tRNA(Pro). As ProRS can inadvertently accommodate and process non-cognate amino acids such as alanine and cysteine, to avoid such errors it has two additional distinct editing activities against alanine. One activity is designated as 'pretransfer' editing and involves the tRNA(Pro)-independent hydrolysis of activated Ala-AMP. The other activity is designated 'posttransfer' editing and involves deacylation of mischarged Ala-tRNA(Pro). The misacylated Cys-tRNA(Pro) is not edited by ProRS. The sequence is that of Proline--tRNA ligase from Alkalilimnicola ehrlichii (strain ATCC BAA-1101 / DSM 17681 / MLHE-1).